A 1223-amino-acid chain; its full sequence is DNA-directed RNA polymerase subunit beta' (1223 aa).

The Zn(2+) site is built by Cys-60, Cys-62, Cys-75, and Cys-78. 3 residues coordinate Mg(2+): Asp-449, Asp-451, and Asp-453. The Zn(2+) site is built by Cys-818, Cys-892, Cys-899, and Cys-902.

This sequence belongs to the RNA polymerase beta' chain family. In terms of assembly, the RNAP catalytic core consists of 2 alpha, 1 beta, 1 beta' and 1 omega subunit. When a sigma factor is associated with the core the holoenzyme is formed, which can initiate transcription. The cofactor is Mg(2+). It depends on Zn(2+) as a cofactor.

It carries out the reaction RNA(n) + a ribonucleoside 5'-triphosphate = RNA(n+1) + diphosphate. In terms of biological role, DNA-dependent RNA polymerase catalyzes the transcription of DNA into RNA using the four ribonucleoside triphosphates as substrates. This chain is DNA-directed RNA polymerase subunit beta', found in Lactobacillus gasseri (strain ATCC 33323 / DSM 20243 / BCRC 14619 / CIP 102991 / JCM 1131 / KCTC 3163 / NCIMB 11718 / NCTC 13722 / AM63).